We begin with the raw amino-acid sequence, 349 residues long: AdoMet-dependent heme synthase (349 aa).

The region spanning 5–214 (TNAPRLIAWE…LHWFYEMQKE (210 aa)) is the Radical SAM core domain. [4Fe-4S] cluster-binding residues include Cys19, Cys23, and Cys26.

This sequence belongs to the radical SAM superfamily. The cofactor is [4Fe-4S] cluster.

The enzyme catalyses Fe-coproporphyrin III + 2 S-adenosyl-L-methionine = heme b + 2 5'-deoxyadenosine + 2 L-methionine + 2 CO2. It participates in porphyrin-containing compound metabolism; protoheme biosynthesis. In terms of biological role, involved in siroheme-dependent heme b biosynthesis. Catalyzes the conversion of Fe-coproporphyrin III into heme by the oxidative decarboxylation of two propionate side chains. This is AdoMet-dependent heme synthase from Methanosarcina barkeri (strain Fusaro / DSM 804).